Here is a 99-residue protein sequence, read N- to C-terminus: uncharacterized protein (99 aa).

Disordered regions lie at residues 1–24 (MKATRRTRVASERGVRRRRRVRAT) and 49–99 (SVRT…RCAT). Basic residues-rich tracts occupy residues 15–24 (VRRRRRVRAT) and 71–81 (SRRRGRPRSSR).

This is an uncharacterized protein from Streptomyces fradiae (Streptomyces roseoflavus).